Here is a 1102-residue protein sequence, read N- to C-terminus: Probable leucine-rich repeat receptor-like protein kinase At5g63930 (1102 aa).

An N-terminal signal peptide occupies residues 1–26; it reads MVKEMMKLAVFFISLLLILLISETTG. At 27–737 the chain is on the extracellular side; that stretch reads LNLEGQYLLE…GKPGGMRSSK (711 aa). 4 N-linked (GlcNAc...) asparagine glycosylation sites follow: N54, N68, N79, and N119. 26 LRR repeats span residues 72–96, 97–120, 122–144, 145–170, 172–192, 193–216, 217–241, 243–264, 265–288, 289–312, 314–336, 337–360, 361–383, 385–408, 409–432, 433–456, 458–480, 481–504, 505–528, 529–552, 554–576, 577–602, 604–624, 625–649, 651–672, and 674–700; these read DPEV…IGGL, VHLK…IGNC, SLEI…IGKL, VSLE…NLLS, SQLV…IGNL, KRLT…IGGC, ESLV…GMLK, LSQV…ISNC, TSLE…LGDL, QSLE…IGNL, YAIE…LGNI, EGLE…LSTL, KNLS…GFQY, RGLF…LGWY, SDLW…LCLH, SNMI…ITTC, TLVQ…LCKQ, VNVT…VGNC, SALQ…IGML, SQLG…IFNC, MLQR…VGSL, YQLE…NLSR, TELQ…LGSL, TGLQ…LSNL, MLEF…SFAN, and SSLL…SMSS. N180 is a glycosylation site (N-linked (GlcNAc...) asparagine). N-linked (GlcNAc...) asparagine glycosylation is present at N263. Residues N302 and N311 are each glycosylated (N-linked (GlcNAc...) asparagine). N-linked (GlcNAc...) asparagine glycosylation is present at N362. An N-linked (GlcNAc...) asparagine glycan is attached at N444. N-linked (GlcNAc...) asparagine glycans are attached at residues N482 and N503. 10 N-linked (GlcNAc...) asparagine glycosylation sites follow: N535, N564, N588, N599, N614, N632, N661, N672, N680, and N695. The chain crosses the membrane as a helical span at residues 738–758; it reads IIAITAAVIGGVSLMLIALIV. At 759 to 1102 the chain is on the cytoplasmic side; the sequence is YLMRRPVRTV…TEELTQTTTP (344 aa). Phosphothreonine is present on residues T793 and T801. The Protein kinase domain occupies 804 to 1091; the sequence is FDESFVVGRG…ERSEGEQEHL (288 aa). ATP-binding positions include 810 to 818 and K832; that span reads VGRGACGTV. A phosphotyrosine mark is found at Y882 and Y919. Catalysis depends on D932, which acts as the Proton acceptor. S966 is modified (phosphoserine). Phosphotyrosine is present on residues Y974 and Y981. A Phosphothreonine modification is found at T982.

The protein belongs to the protein kinase superfamily. Ser/Thr protein kinase family.

The protein resides in the cell membrane. The enzyme catalyses L-seryl-[protein] + ATP = O-phospho-L-seryl-[protein] + ADP + H(+). It catalyses the reaction L-threonyl-[protein] + ATP = O-phospho-L-threonyl-[protein] + ADP + H(+). This Arabidopsis thaliana (Mouse-ear cress) protein is Probable leucine-rich repeat receptor-like protein kinase At5g63930.